Reading from the N-terminus, the 299-residue chain is Hydrogenase maturation factor HypB (299 aa).

C2, C5, and C7 together coordinate Ni(2+). The segment at 18 to 57 is disordered; the sequence is EVGDDGHGHHHHDGHHDHDHDHDHHRGDHEHDDHHHAEDG. The segment covering 31 to 57 has biased composition (basic and acidic residues); that stretch reads GHHDHDHDHDHHRGDHEHDDHHHAEDG. A G-domain region spans residues 107-268; the sequence is ALNFVSSPGS…LRVNPRLQTL (162 aa). Ni(2+) contacts are provided by C167, H168, and C199. Zn(2+) is bound by residues C167, H168, and C199.

Belongs to the SIMIBI class G3E GTPase family. HypB/HupM subfamily.

Functionally, involved in the maturation of [NiFe] hydrogenases. Required for nickel insertion into the metal center of the hydrogenase. Exhibits a low intrinsic GTPase activity, which is essential for nickel insertion. Is able to bind 4 nickel ions per subunit. Can also bind zinc. This is Hydrogenase maturation factor HypB from Rhizobium leguminosarum bv. viciae.